The sequence spans 385 residues: 8-amino-7-oxononanoate synthase (385 aa).

Residue R21 coordinates substrate. 108-109 provides a ligand contact to pyridoxal 5'-phosphate; that stretch reads GF. H133 contacts substrate. Positions 179, 207, and 233 each coordinate pyridoxal 5'-phosphate. N6-(pyridoxal phosphate)lysine is present on K236. A substrate-binding site is contributed by T352.

This sequence belongs to the class-II pyridoxal-phosphate-dependent aminotransferase family. BioF subfamily. As to quaternary structure, homodimer. Pyridoxal 5'-phosphate is required as a cofactor.

The catalysed reaction is 6-carboxyhexanoyl-[ACP] + L-alanine + H(+) = (8S)-8-amino-7-oxononanoate + holo-[ACP] + CO2. The protein operates within cofactor biosynthesis; biotin biosynthesis. Catalyzes the decarboxylative condensation of pimeloyl-[acyl-carrier protein] and L-alanine to produce 8-amino-7-oxononanoate (AON), [acyl-carrier protein], and carbon dioxide. In Salmonella paratyphi C (strain RKS4594), this protein is 8-amino-7-oxononanoate synthase.